The sequence spans 284 residues: uncharacterized protein (284 aa).

The helical transmembrane segment at Ile-12 to Asn-32 threads the bilayer.

Belongs to the serine esterase family.

Its subcellular location is the membrane. This is an uncharacterized protein from Escherichia coli O157:H7.